We begin with the raw amino-acid sequence, 266 residues long: Dihydropteroate synthase (266 aa).

One can recognise a Pterin-binding domain in the interval 12–260; it reads AAIMGILNVT…DVKANQDIVA (249 aa). Mg(2+) is bound at residue Asn19. Residues Thr59, Asp93, Asn112, Asp176, Lys212, and 248–250 contribute to the (7,8-dihydropterin-6-yl)methyl diphosphate site; that span reads RVH.

It belongs to the DHPS family. Homodimer or homotrimer. Mg(2+) is required as a cofactor.

The catalysed reaction is (7,8-dihydropterin-6-yl)methyl diphosphate + 4-aminobenzoate = 7,8-dihydropteroate + diphosphate. It participates in cofactor biosynthesis; tetrahydrofolate biosynthesis; 7,8-dihydrofolate from 2-amino-4-hydroxy-6-hydroxymethyl-7,8-dihydropteridine diphosphate and 4-aminobenzoate: step 1/2. Functionally, catalyzes the condensation of para-aminobenzoate (pABA) with 6-hydroxymethyl-7,8-dihydropterin diphosphate (DHPt-PP) to form 7,8-dihydropteroate (H2Pte), the immediate precursor of folate derivatives. This is Dihydropteroate synthase (folP) from Streptococcus pyogenes serotype M1.